The chain runs to 1820 residues: MESNFNQEGVPRPSYVFSADPIARPSEINFDGIKLDLSHEFSLVAPNTEANSFESKDYLQVCLRIRPFTQSEKELESEGCVHILDSQTVVLKEPQCILGRLSEKSSGQMAQKFSFSKVFGPATTQKEFFQGCIMQPVKDLLKGQSRLIFTYGLTNSGKTYTFQGTEENIGILPRTLNVLFDSLQERLYTKMNLKPHRSREYLRLSSEQEKEEIASKSALLRQIKEVTVHNDSDDTLYGSLTNSLNISEFEESIKDYEQANLNMANSIKFSVWVSFFEIYNEYIYDLFVPVSSKFQKRKMLRLSQDVKGYSFIKDLQWIQVSDSKEAYRLLKLGIKHQSVAFTKLNNASSRSHSIFTVKILQIEDSEMSRVIRVSELSLCDLAGSERTMKTQNEGERLRETGNINTSLLTLGKCINVLKNSEKSKFQQHVPFRESKLTHYFQSFFNGKGKICMIVNISQCYLAYDETLNVLKFSAIAQKVCVPDTLNSSQEKLFGPVKSSQDVSLDSNSNSKILNVKRATISWENSLEDLMEDEDLVEELENAEETQNVETKLLDEDLDKTLEENKAFISHEEKRKLLDLIEDLKKKLINEKKEKLTLEFKIREEVTQEFTQYWAQREADFKETLLQEREILEENAERRLAIFKDLVGKCDTREEAAKDICATKVETEETHNYVGFEDIIDSLQDNVADIKKQAEIAHLYIASLPDPQEATACLELKFNQIKAELAKTKGELIKTKEELKKRENESDSLIQELETSNKKIITQNQRIKELINIIDQKEDTINEFQNLKSHMENTFKCNDKADTSSLIINNKLICNETVEVPKDSKSKICSERKRVNENELQQDEPPAKKGSIHVSSAITEDQKKSEEVRPNIAEIEDIRVLQENNEGLRAFLLTIENELKNEKEEKAELNKQIVHFQQELSLSEKKNLTLSKEVQQIQSNYDIAIAELHVQKSKNQEQEEKIMKLSNEIETATRSITNNVSQIKLMHTKIDELRTLDSVSQISNIDLLNLRDLSNGSEEDNLPNTQLDLLGNDYLVSKQVKEYRIQEPNRENSFHSSIEAIWEECKEIVKASSKKSHQIEELEQQIEKLQAEVKGYKDENNRLKEKEHKNQDDLLKEKETLIQQLKEELQEKNVTLDVQIQHVVEGKRALSELTQGVTCYKAKIKELETILETQKVECSHSAKLEQDILEKESIILKLERNLKEFQEHLQDSVKNTKDLNVKELKLKEEITQLTNNLQDMKHLLQLKEEEEETNRQETEKLKEELSASSARTQNLKADLQRKEEDYADLKEKLTDAKKQIKQVQKEVSVMRDEDKLLRIKINELEKKKNQCSQELDMKQRTIQQLKEQLNNQKVEEAIQQYERACKDLNVKEKIIEDMRMTLEEQEQTQVEQDQVLEAKLEEVERLATELEKWKEKCNDLETKNNQRSNKEHENNTDVLGKLTNLQDELQESEQKYNADRKKWLEEKMMLITQAKEAENIRNKEMKKYAEDRERFFKQQNEMEILTAQLTEKDSDLQKWREERDQLVAALEIQLKALISSNVQKDNEIEQLKRIISETSKIETQIMDIKPKRISSADPDKLQTEPLSTSFEISRNKIEDGSVVLDSCEVSTENDQSTRFPKPELEIQFTPLQPNKMAVKHPGCTTPVTVKIPKARKRKSNEMEEDLVKCENKKNATPRTNLKFPISDDRNSSVKKEQKVAIRPSSKKTYSLRSQASIIGVNLATKKKEGTLQKFGDFLQHSPSILQSKAKKIIETMSSSKLSNVEASKENVSQPKRAKRKLYTSEISSPIDISGQVILMDQKMKESDHQIIKRRLRTKTAK.

The Kinesin motor domain maps to 58–479 (YLQVCLRIRP…LKFSAIAQKV (422 aa)). Position 152-159 (152-159 (GLTNSGKT)) interacts with ATP. At Ser-488 the chain carries Phosphoserine. 2 coiled-coil regions span residues 523 to 603 (ENSL…KIRE) and 674 to 793 (GFED…MENT). Thr-560 is modified (phosphothreonine). The tract at residues 829 to 866 (SERKRVNENELQQDEPPAKKGSIHVSSAITEDQKKSEE) is disordered. Ser-997 bears the Phosphoserine mark. The necessary and sufficient for interaction with SHTN1 stretch occupies residues 1050-1107 (ENSFHSSIEAIWEECKEIVKASSKKSHQIEELEQQIEKLQAEVKGYKDENNRLKEKEH). Over residues 1247–1264 (EEEEETNRQETEKLKEEL) the composition is skewed to basic and acidic residues. Positions 1247-1275 (EEEEETNRQETEKLKEELSASSARTQNLK) are disordered. Residues 1265–1274 (SASSARTQNL) show a composition bias toward polar residues. Residues 1560 to 1820 (IETQIMDIKP…KRRLRTKTAK (261 aa)) form an interaction with PIN1 region. A Phosphoserine modification is found at Ser-1588. Thr-1644 carries the phosphothreonine; by CDK1 modification. Residues Ser-1658, Ser-1715, and Ser-1740 each carry the phosphoserine modification. The span at 1760–1772 (LSNVEASKENVSQ) shows a compositional bias: polar residues. The segment at 1760–1781 (LSNVEASKENVSQPKRAKRKLY) is disordered.

Belongs to the TRAFAC class myosin-kinesin ATPase superfamily. Kinesin family. In terms of assembly, oligomerizes (via kinesin motor domain). Associates with microtubules. Interacts (via C-terminal globular tail region) with PIN1 (via WW domain). Interacts with PRC1. Interacts with SHTN1 (via N-terminus); the interaction is direct and promotes the association of SHTN1 to microtubules in primary neurons. In terms of processing, phosphorylated during mitosis by CDK1. In terms of tissue distribution, brain, ovary, kidney and testis (at protein level). Overexpressed in bladder cancer cells (at protein level). Expressed in testis. Overexpressed in bladder cancer cells.

The protein localises to the nucleus. It localises to the cytoplasm. The protein resides in the cytoskeleton. Its subcellular location is the microtubule organizing center. It is found in the centrosome. The protein localises to the nucleolus. It localises to the nucleoplasm. The protein resides in the spindle. Its subcellular location is the spindle pole. It is found in the midbody. The protein localises to the cell projection. It localises to the axon. The protein resides in the growth cone. Plus-end-directed motor enzyme that is required for completion of cytokinesis. Required for proper midbody organization and abscission in polarized cortical stem cells. Plays a role in the regulation of neuronal polarization by mediating the transport of specific cargos. Participates in the mobilization of SHTN1 and in the accumulation of PIP3 in the growth cone of primary hippocampal neurons in a tubulin and actin-dependent manner. In the developing telencephalon, cooperates with SHTN1 to promote both the transition from the multipolar to the bipolar stage and the radial migration of cortical neurons from the ventricular zone toward the superficial layer of the neocortex. Involved in cerebral cortex growth. Acts as an oncogene for promoting bladder cancer cells proliferation, apoptosis inhibition and carcinogenic progression. This Homo sapiens (Human) protein is Kinesin-like protein KIF20B.